We begin with the raw amino-acid sequence, 63 residues long: Large ribosomal subunit protein bL28 (63 aa).

This sequence belongs to the bacterial ribosomal protein bL28 family.

The chain is Large ribosomal subunit protein bL28 from Petrotoga mobilis (strain DSM 10674 / SJ95).